Here is a 184-residue protein sequence, read N- to C-terminus: Potassium-transporting ATPase KdpC subunit (184 aa).

The chain crosses the membrane as a helical span at residues 6-26; it reads TAVLYTIISAVFLGLGYPLIM.

Belongs to the KdpC family. In terms of assembly, the system is composed of three essential subunits: KdpA, KdpB and KdpC.

The protein localises to the cell inner membrane. Part of the high-affinity ATP-driven potassium transport (or Kdp) system, which catalyzes the hydrolysis of ATP coupled with the electrogenic transport of potassium into the cytoplasm. This subunit acts as a catalytic chaperone that increases the ATP-binding affinity of the ATP-hydrolyzing subunit KdpB by the formation of a transient KdpB/KdpC/ATP ternary complex. The protein is Potassium-transporting ATPase KdpC subunit of Acidobacterium capsulatum (strain ATCC 51196 / DSM 11244 / BCRC 80197 / JCM 7670 / NBRC 15755 / NCIMB 13165 / 161).